A 650-amino-acid chain; its full sequence is Macrolide export ATP-binding/permease protein MacB (650 aa).

In terms of domain architecture, ABC transporter spans 2–238 (IDIKGIRKSY…PTTAQEKRQE (237 aa)). Residue 38 to 45 (GPSGSGKS) coordinates ATP. The next 4 membrane-spanning stretches (helical) occupy residues 267–287 (GLSM…LALG), 531–551 (IAAI…LVSV), 580–600 (IVVS…FSLL), and 610–630 (VVSA…GIVF).

Belongs to the ABC transporter superfamily. Macrolide exporter (TC 3.A.1.122) family. As to quaternary structure, homodimer.

It localises to the cell inner membrane. In terms of biological role, non-canonical ABC transporter that contains transmembrane domains (TMD), which form a pore in the inner membrane, and an ATP-binding domain (NBD), which is responsible for energy generation. Confers resistance against macrolides. This is Macrolide export ATP-binding/permease protein MacB from Bdellovibrio bacteriovorus (strain ATCC 15356 / DSM 50701 / NCIMB 9529 / HD100).